The sequence spans 83 residues: Probable calcium-binding protein CML29 (83 aa).

EF-hand domains lie at 5 to 40 and 43 to 75; these read TEKA…LGSV and DDVK…NRGL. 10 residues coordinate Ca(2+): D18, N20, D22, K24, E29, D53, D55, D57, N59, and E64.

Functionally, potential calcium sensor. In Arabidopsis thaliana (Mouse-ear cress), this protein is Probable calcium-binding protein CML29 (CML29).